The chain runs to 224 residues: Cytochrome c oxidase subunit 2 (224 aa).

The Mitochondrial intermembrane portion of the chain corresponds to 1–26; sequence MSTWGQMNLMDPASPIQIEMMLFHDH. The chain crosses the membrane as a helical span at residues 27-48; that stretch reads AMAILIGIFTLVSCLGVKLCFN. At 49 to 62 the chain is on the mitochondrial matrix side; sequence TLSTRTMHEAQLLE. Residues 63–82 traverse the membrane as a helical segment; sequence TLWTILPAFLLVWLALPSLR. Over 83-224 the chain is Mitochondrial intermembrane; the sequence is LLYLLDEQSS…DVKDFINMCN (142 aa). Cu cation contacts are provided by His161, Cys196, Glu198, Cys200, His204, and Met207. Glu198 is a binding site for Mg(2+).

Belongs to the cytochrome c oxidase subunit 2 family. As to quaternary structure, component of the cytochrome c oxidase (complex IV, CIV), a multisubunit enzyme composed of a catalytic core of 3 subunits and several supernumerary subunits. The complex exists as a monomer or a dimer and forms supercomplexes (SCs) in the inner mitochondrial membrane with ubiquinol-cytochrome c oxidoreductase (cytochrome b-c1 complex, complex III, CIII). Requires Cu cation as cofactor.

It localises to the mitochondrion inner membrane. It carries out the reaction 4 Fe(II)-[cytochrome c] + O2 + 8 H(+)(in) = 4 Fe(III)-[cytochrome c] + 2 H2O + 4 H(+)(out). In terms of biological role, component of the cytochrome c oxidase, the last enzyme in the mitochondrial electron transport chain which drives oxidative phosphorylation. The respiratory chain contains 3 multisubunit complexes succinate dehydrogenase (complex II, CII), ubiquinol-cytochrome c oxidoreductase (cytochrome b-c1 complex, complex III, CIII) and cytochrome c oxidase (complex IV, CIV), that cooperate to transfer electrons derived from NADH and succinate to molecular oxygen, creating an electrochemical gradient over the inner membrane that drives transmembrane transport and the ATP synthase. Cytochrome c oxidase is the component of the respiratory chain that catalyzes the reduction of oxygen to water. Electrons originating from reduced cytochrome c in the intermembrane space (IMS) are transferred via the dinuclear copper A center (CU(A)) of subunit 2 and heme A of subunit 1 to the active site in subunit 1, a binuclear center (BNC) formed by heme A3 and copper B (CU(B)). The BNC reduces molecular oxygen to 2 water molecules using 4 electrons from cytochrome c in the IMS and 4 protons from the mitochondrial matrix. The chain is Cytochrome c oxidase subunit 2 (COII) from Albinaria turrita (Door snail).